The sequence spans 390 residues: Anhydro-N-acetylmuramic acid kinase (390 aa).

9–16 (GTSLDGID) is a binding site for ATP.

The protein belongs to the anhydro-N-acetylmuramic acid kinase family.

It carries out the reaction 1,6-anhydro-N-acetyl-beta-muramate + ATP + H2O = N-acetyl-D-muramate 6-phosphate + ADP + H(+). It functions in the pathway amino-sugar metabolism; 1,6-anhydro-N-acetylmuramate degradation. It participates in cell wall biogenesis; peptidoglycan recycling. Functionally, catalyzes the specific phosphorylation of 1,6-anhydro-N-acetylmuramic acid (anhMurNAc) with the simultaneous cleavage of the 1,6-anhydro ring, generating MurNAc-6-P. Is required for the utilization of anhMurNAc either imported from the medium or derived from its own cell wall murein, and thus plays a role in cell wall recycling. The polypeptide is Anhydro-N-acetylmuramic acid kinase (Bacillus cereus (strain ATCC 14579 / DSM 31 / CCUG 7414 / JCM 2152 / NBRC 15305 / NCIMB 9373 / NCTC 2599 / NRRL B-3711)).